The primary structure comprises 216 residues: Early E3 25 kDa glycoprotein (216 aa).

7 N-linked (GlcNAc...) asparagine; by host glycosylation sites follow: Asn-25, Asn-82, Asn-97, Asn-109, Asn-142, Asn-147, and Asn-160.

This chain is Early E3 25 kDa glycoprotein, found in Canis lupus familiaris (Dog).